A 540-amino-acid polypeptide reads, in one-letter code: CTP synthase (540 aa).

The tract at residues M1–L265 is amidoligase domain. S13 lines the CTP pocket. UTP is bound at residue S13. ATP contacts are provided by residues S14–L19 and D71. Mg(2+)-binding residues include D71 and E139. CTP is bound by residues D146 to E148, K186 to Q191, and K222. UTP is bound by residues K186–Q191 and K222. Residues R290 to N539 enclose the Glutamine amidotransferase type-1 domain. An L-glutamine-binding site is contributed by G352. C379 (nucleophile; for glutamine hydrolysis) is an active-site residue. Residues L380–Q383, E403, and R467 contribute to the L-glutamine site. Residues H512 and E514 contribute to the active site.

Belongs to the CTP synthase family. As to quaternary structure, homotetramer.

It catalyses the reaction UTP + L-glutamine + ATP + H2O = CTP + L-glutamate + ADP + phosphate + 2 H(+). The catalysed reaction is L-glutamine + H2O = L-glutamate + NH4(+). The enzyme catalyses UTP + NH4(+) + ATP = CTP + ADP + phosphate + 2 H(+). The protein operates within pyrimidine metabolism; CTP biosynthesis via de novo pathway; CTP from UDP: step 2/2. With respect to regulation, allosterically activated by GTP, when glutamine is the substrate; GTP has no effect on the reaction when ammonia is the substrate. The allosteric effector GTP functions by stabilizing the protein conformation that binds the tetrahedral intermediate(s) formed during glutamine hydrolysis. Inhibited by the product CTP, via allosteric rather than competitive inhibition. Its function is as follows. Catalyzes the ATP-dependent amination of UTP to CTP with either L-glutamine or ammonia as the source of nitrogen. Regulates intracellular CTP levels through interactions with the four ribonucleotide triphosphates. The polypeptide is CTP synthase (Rickettsia bellii (strain RML369-C)).